Reading from the N-terminus, the 495-residue chain is MGRKKKKQLKPWCWYCNRDFDDEKILIQHQKAKHFKCHICHKKLYTGPGLAIHCMQVHKETIDAVPNAIPGRTDIELEIYGMEGIPEKDMDERRRLLEQKTQESQKKKQQDDSDEYDDDESAASTSFQPQPVQPQQGYIPPMAQPGLPPVPGAPGMPPGIPPLMPGVPPLMPGMPPVMPGMPPGLHHQRKYTQSFCGENIMMPMGGMMPPGPGIPPLMPGMPPGMPPPVPRPGIPPMTQAQAVSAPGILNRPPAPTAAVPAPQPPVTKPLFPSAGQMGTPVTSSSTASSNSESLSASSKALFPSTAQAQAAVQGPVGTDFKPLNSTPAATTTEPPKPTFPAYTQSTASTTSTTNSTAAKPAASITSKPATLTTTSATSKLIHPDEDISLEERRAQLPKYQRNLPRPGQTPIGNPPVGPIGGMMPPQPGLPQQQAMRPPMPPHGQYGGHHQGMPGYLPGAMPPYGQGPPMVPPYQGGPPRPPMGMRPPVMSQGGRY.

Residues 1–92 (MGRKKKKQLK…EGIPEKDMDE (92 aa)) are microtubule-binding region. 2 C2H2-type zinc fingers span residues 11-34 (PWCW…KAKH) and 35-58 (FKCH…MQVH). A compositionally biased stretch (basic and acidic residues) spans 99–111 (QKTQESQKKKQQD). Disordered regions lie at residues 99-161 (QKTQ…PGIP), 252-292 (PPAP…SNSE), and 316-372 (VGTD…ATLT). Residues 112–121 (DSDEYDDDES) show a composition bias toward acidic residues. The segment covering 127–136 (FQPQPVQPQQ) has biased composition (polar residues). The span at 142–161 (MAQPGLPPVPGAPGMPPGIP) shows a compositional bias: pro residues. Composition is skewed to low complexity over residues 283-292 (SSSTASSNSE) and 326-372 (TPAA…ATLT). The tract at residues 376–408 (ATSKLIHPDEDISLEERRAQLPKYQRNLPRPGQ) is GLEBS. The tract at residues 462 to 495 (PYGQGPPMVPPYQGGPPRPPMGMRPPVMSQGGRY) is disordered. A compositionally biased stretch (pro residues) spans 464–484 (GQGPPMVPPYQGGPPRPPMGM).

As to quaternary structure, interacts (via GLEBS region) with BUB3. As to expression, in day-13 embryo, strongly expressed in the nervous system (brain, spinal cord and dorsal root ganglia), with strong to weak expression in other regions. Continues to be strongly expressed in the neonatal brain while expression is weak in the brain and spinal cord of adult.

Its subcellular location is the nucleus. It localises to the chromosome. The protein localises to the centromere. It is found in the kinetochore. The protein resides in the cytoplasm. Its subcellular location is the cytoskeleton. It localises to the spindle. In terms of biological role, kinetochore- and microtubule-binding protein that plays a key role in spindle assembly. ZNF207/BuGZ is mainly composed of disordered low-complexity regions and undergoes phase transition or coacervation to form temperature-dependent liquid droplets. Coacervation promotes microtubule bundling and concentrates tubulin, promoting microtubule polymerization and assembly of spindle and spindle matrix by concentrating its building blocks. Also acts as a regulator of mitotic chromosome alignment by mediating the stability and kinetochore loading of BUB3. Mechanisms by which BUB3 is protected are unclear: according to a first report, ZNF207/BuGZ may act by blocking ubiquitination and proteasomal degradation of BUB3. According to another report, the stabilization is independent of the proteasome. The chain is BUB3-interacting and GLEBS motif-containing protein ZNF207 from Mus musculus (Mouse).